Reading from the N-terminus, the 490-residue chain is Bifunctional protein GlmU (490 aa).

The tract at residues 1 to 241 (MSSPGDTAVL…SALVAGVNNR (241 aa)) is pyrophosphorylase. UDP-N-acetyl-alpha-D-glucosamine-binding positions include 12 to 15 (LAAG), Lys26, Gln83, 88 to 89 (GT), 112 to 114 (SGD), Gly151, Glu166, Asn181, and Asn239. Asp114 lines the Mg(2+) pocket. Asn239 is a binding site for Mg(2+). Residues 242–262 (VQLAQLGAELNRRIVAAHQLA) form a linker region. Residues 263–490 (GVTVVDPATT…AGGRPAGEAE (228 aa)) form an N-acetyltransferase region. UDP-N-acetyl-alpha-D-glucosamine-binding residues include Arg344 and Lys362. The active-site Proton acceptor is the His374. Residues Tyr377 and Asn388 each coordinate UDP-N-acetyl-alpha-D-glucosamine. Acetyl-CoA-binding positions include Ala391, 397-398 (NY), Ser416, and Ala434. The tract at residues 462 to 490 (RRKRPGSAAARAAEAAEKAAGGRPAGEAE) is disordered. Residues 467–490 (GSAAARAAEAAEKAAGGRPAGEAE) show a composition bias toward low complexity.

In the N-terminal section; belongs to the N-acetylglucosamine-1-phosphate uridyltransferase family. It in the C-terminal section; belongs to the transferase hexapeptide repeat family. Homotrimer. Mg(2+) serves as cofactor.

The protein resides in the cytoplasm. The enzyme catalyses alpha-D-glucosamine 1-phosphate + acetyl-CoA = N-acetyl-alpha-D-glucosamine 1-phosphate + CoA + H(+). It carries out the reaction N-acetyl-alpha-D-glucosamine 1-phosphate + UTP + H(+) = UDP-N-acetyl-alpha-D-glucosamine + diphosphate. Its pathway is nucleotide-sugar biosynthesis; UDP-N-acetyl-alpha-D-glucosamine biosynthesis; N-acetyl-alpha-D-glucosamine 1-phosphate from alpha-D-glucosamine 6-phosphate (route II): step 2/2. It participates in nucleotide-sugar biosynthesis; UDP-N-acetyl-alpha-D-glucosamine biosynthesis; UDP-N-acetyl-alpha-D-glucosamine from N-acetyl-alpha-D-glucosamine 1-phosphate: step 1/1. It functions in the pathway bacterial outer membrane biogenesis; LPS lipid A biosynthesis. Catalyzes the last two sequential reactions in the de novo biosynthetic pathway for UDP-N-acetylglucosamine (UDP-GlcNAc). The C-terminal domain catalyzes the transfer of acetyl group from acetyl coenzyme A to glucosamine-1-phosphate (GlcN-1-P) to produce N-acetylglucosamine-1-phosphate (GlcNAc-1-P), which is converted into UDP-GlcNAc by the transfer of uridine 5-monophosphate (from uridine 5-triphosphate), a reaction catalyzed by the N-terminal domain. The polypeptide is Bifunctional protein GlmU (Mycolicibacterium paratuberculosis (strain ATCC BAA-968 / K-10) (Mycobacterium paratuberculosis)).